The sequence spans 206 residues: Threonine efflux protein (206 aa).

The helical transmembrane segment at 1 to 21 threads the bilayer; sequence MMMLFFTVAMVHIVALMSPGP. The Periplasmic segment spans residues 22–43; that stretch reads DFFFVSQTAVSRSRKEAMMGVL. A helical membrane pass occupies residues 44 to 64; sequence GITCGVMVWAGVALLGLHLII. The Cytoplasmic portion of the chain corresponds to 65–66; that stretch reads EK. The chain crosses the membrane as a helical span at residues 67–87; it reads MAWLHTIIMVGGGLYLCWMGY. Over 88-149 the chain is Periplasmic; it reads QMLRGALKKQ…VGDNVGAAAR (62 aa). A helical transmembrane segment spans residues 150 to 173; the sequence is WGIFALITLETLAWFTVVASLFAL. The Cytoplasmic segment spans residues 174 to 206; sequence PKMRRGYQRLAKWIDGFAGALFAGFGIHLIISR.

The protein belongs to the Rht family.

Its subcellular location is the cell inner membrane. Conducts the efflux of threonine. The chain is Threonine efflux protein (rhtC) from Salmonella typhimurium (strain LT2 / SGSC1412 / ATCC 700720).